The following is a 676-amino-acid chain: Envelope glycoprotein (676 aa).

An N-terminal signal peptide occupies residues 1–32 (MGVTGILQLPRDRFKRTSFFLWVIILFQRTFS). The Extracellular segment spans residues 33 to 650 (IPLGVIHNST…NDNWWTGWRQ (618 aa)). Asn40 carries an N-linked (GlcNAc...) asparagine; by host glycan. 5 cysteine pairs are disulfide-bonded: Cys53/Cys609, Cys108/Cys135, Cys121/Cys147, Cys511/Cys556, and Cys601/Cys608. The interval 54–201 (RDKLSSTNQL…DFFSSHPLRE (148 aa)) is receptor-binding. N-linked (GlcNAc...) asparagine; by host glycosylation is found at Asn204, Asn228, Asn238, Asn257, Asn268, Asn296, Asn317, Asn333, Asn346, Asn386, and Asn413. The interval 305–485 (ELSFTAVSNR…SGKLGLITNT (181 aa)) is mucin-like region. Residues 314 to 335 (RAKNISGQSPARTSSDPGTNTT) are compositionally biased toward polar residues. Residues 314-337 (RAKNISGQSPARTSSDPGTNTTTE) form a disordered region. Residues 370-478 (TISTSPQPPT…TGEESASSGK (109 aa)) form a disordered region. Low complexity predominate over residues 414–427 (DSTASDTPPATTAA). Residues Asn436, Asn454, and Asn462 are each glycosylated (N-linked (GlcNAc...) asparagine; by host). A compositionally biased stretch (polar residues) spans 447-464 (ATTTSPQNHSETAGNNNT). The fusion peptide stretch occupies residues 524-539 (GAAIGLAWIPYFGPAA). Positions 554–595 (LICGLRQLANETTQALQLFLRATTELRTFSILNRKAIDFLLQ) form a coiled coil. Asn563 is a glycosylation site (N-linked (GlcNAc...) asparagine; by host). Residues 615 to 634 (WTKNITDKIDQIIHDFVDKT) are a coiled coil. Residue Asn618 is glycosylated (N-linked (GlcNAc...) asparagine; by host). Residues 651 to 671 (WIPAGIGVTGVIIAVIALFCI) form a helical membrane-spanning segment. 2 S-palmitoyl cysteine; by host lipidation sites follow: Cys670 and Cys672. Residues 672–676 (CKFVF) lie on the Cytoplasmic side of the membrane.

This sequence belongs to the filoviruses glycoprotein family. In terms of assembly, homotrimer; each monomer consists of a GP1 and a GP2 subunit linked by disulfide bonds. The resulting peplomers (GP1,2) protrude from the virus surface as spikes. Interacts with host integrin alpha-V/ITGAV. Interacts with host CLEC10A. Binds also to host CD209 and CLEC4M/DC-SIGN(R). Interacts with host FOLR1. Interacts with BST2; this interaction inhibits the antiviral effect of BST2 and this allows viral release from infected cells. Interacts with host FCN1; this interaction enhances viral entry. Interacts with host TLR4; this interaction induces cell death in T-lymphocytes or proinflammatory cytokines and SOCS1 production in monocytes. As to quaternary structure, interacts with host entry receptor NPC1. GP1 and GP2delta are part of GP1,2delta soluble complexes released by ectodomain shedding. In terms of processing, the signal peptide region modulates GP's high mannose glycosylation, thereby determining the efficiency of the interactions with DC-SIGN(R). N-glycosylated. Post-translationally, O-glycosylated in the mucin-like region. In terms of processing, palmitoylation of GP2 is not required for its function. Specific enzymatic cleavages in vivo yield mature proteins. The precursor is processed into GP1 and GP2 by host cell furin in the trans Golgi, and maybe by other host proteases, to yield the mature GP1 and GP2 proteins. The cleavage site corresponds to the furin optimal cleavage sequence [KR]-X-[KR]-R. This cleavage does not seem to be required for function. After the internalization of the virus into cell endosomes, GP1 C-terminus is removed by the endosomal proteases cathepsin B, cathepsin L, or both, leaving a 19-kDa N-terminal fragment which is further digested by cathepsin B. Proteolytic processing of GP1,2 by host ADAM17 can remove the transmembrane anchor of GP2 and leads to shedding of complexes consisting in GP1 and truncated GP2 (GP1,2delta).

The protein localises to the virion membrane. The protein resides in the host cell membrane. It is found in the secreted. Its function is as follows. Trimeric GP1,2 complexes form the virion surface spikes and mediate the viral entry processes, with GP1 acting as the receptor-binding subunit and GP2 as the membrane fusion subunit. At later times of infection, down-regulates the expression of various host cell surface molecules that are essential for immune surveillance and cell adhesion. Down-modulates several integrins including ITGA1, ITGA2, ITGA3, ITGA4, ITGA5, ITGA6, ITGAV and ITGB1. This decrease in cell adhesion molecules may lead to cell detachment, contributing to the disruption of blood vessel integrity and hemorrhages developed during infection (cytotoxicity). Interacts with host TLR4 and thereby stimulates the differentiation and activation of monocytes leading to bystander death of T-lymphocytes. Down-regulates as well the function of host natural killer cells. Counteracts the antiviral effect of host BST2/tetherin that restricts release of progeny virions from infected cells. However, cooperates with VP40 and host BST2 to activate canonical NF-kappa-B pathway in a manner dependent on neddylation. Functions as a decoy for anti-GP1,2 antibodies thereby contributing to viral immune evasion. Interacts and activates host macrophages and dendritic cells inducing up-regulation of cytokine transcription. This effect is mediated throught activation of host TLR4. In terms of biological role, responsible for binding to the receptor(s) on target cells. Interacts with CD209/DC-SIGN and CLEC4M/DC-SIGNR which act as cofactors for virus entry into dendritic cells (DCs) and endothelial cells. Binding to the macrophage specific lectin CLEC10A also seems to enhance virus infectivity. Interaction with FOLR1/folate receptor alpha may be a cofactor for virus entry in some cell types, although results are contradictory. Members of the Tyro3 receptor tyrosine kinase family also seem to be cell entry factors in filovirus infection. Once attached, the virions are internalized through clathrin-dependent endocytosis and/or macropinocytosis. After internalization of the virus into the endosomes of the host cell, proteolysis of GP1 by two cysteine proteases, CTSB/cathepsin B and CTSL/cathepsin L removes the glycan cap and allows GP1 binding to the host entry receptor NPC1. NPC1-binding, Ca(2+) and acidic pH induce a conformational change of GP2, which unmasks its fusion peptide and permit membranes fusion. Functionally, acts as a class I viral fusion protein. Under the current model, the protein has at least 3 conformational states: pre-fusion native state, pre-hairpin intermediate state, and post-fusion hairpin state. During viral and target cell membrane fusion, the coiled coil regions (heptad repeats) assume a trimer-of-hairpins structure, positioning the fusion peptide in close proximity to the C-terminal region of the ectodomain. The formation of this structure appears to drive apposition and subsequent fusion of viral and target cell membranes. Responsible for penetration of the virus into the cell cytoplasm by mediating the fusion of the membrane of the endocytosed virus particle with the endosomal membrane. Low pH in endosomes induces an irreversible conformational change in GP2, releasing the fusion hydrophobic peptide. The sequence is that of Envelope glycoprotein (GP) from Zaire ebolavirus (strain Kikwit-95) (ZEBOV).